Consider the following 488-residue polypeptide: Glutamyl-tRNA(Gln) amidotransferase subunit A (488 aa).

Residues K77 and S152 each act as charge relay system in the active site. The active-site Acyl-ester intermediate is the S176.

This sequence belongs to the amidase family. GatA subfamily. Heterotrimer of A, B and C subunits.

The enzyme catalyses L-glutamyl-tRNA(Gln) + L-glutamine + ATP + H2O = L-glutaminyl-tRNA(Gln) + L-glutamate + ADP + phosphate + H(+). Functionally, allows the formation of correctly charged Gln-tRNA(Gln) through the transamidation of misacylated Glu-tRNA(Gln) in organisms which lack glutaminyl-tRNA synthetase. The reaction takes place in the presence of glutamine and ATP through an activated gamma-phospho-Glu-tRNA(Gln). The polypeptide is Glutamyl-tRNA(Gln) amidotransferase subunit A (Streptococcus pyogenes serotype M28 (strain MGAS6180)).